The chain runs to 341 residues: L-threonine 3-dehydrogenase (341 aa).

Cys38 contacts Zn(2+). Catalysis depends on charge relay system residues Thr40 and His43. Positions 63, 64, 93, 96, 99, and 107 each coordinate Zn(2+). NAD(+)-binding positions include Ile175, Asp195, Arg200, 262–264 (LGI), and 286–287 (IY).

This sequence belongs to the zinc-containing alcohol dehydrogenase family. As to quaternary structure, homotetramer. Requires Zn(2+) as cofactor.

The protein localises to the cytoplasm. It carries out the reaction L-threonine + NAD(+) = (2S)-2-amino-3-oxobutanoate + NADH + H(+). It participates in amino-acid degradation; L-threonine degradation via oxydo-reductase pathway; glycine from L-threonine: step 1/2. Catalyzes the NAD(+)-dependent oxidation of L-threonine to 2-amino-3-ketobutyrate. The chain is L-threonine 3-dehydrogenase from Colwellia psychrerythraea (strain 34H / ATCC BAA-681) (Vibrio psychroerythus).